The primary structure comprises 249 residues: Sugar fermentation stimulation protein homolog (249 aa).

The protein belongs to the SfsA family.

The sequence is that of Sugar fermentation stimulation protein homolog from Synechococcus sp. (strain RCC307).